Reading from the N-terminus, the 338-residue chain is Tetraacyldisaccharide 4'-kinase (338 aa).

Residue 67–74 participates in ATP binding; the sequence is IAGGAGKT.

The protein belongs to the LpxK family.

It carries out the reaction a lipid A disaccharide + ATP = a lipid IVA + ADP + H(+). The protein operates within glycolipid biosynthesis; lipid IV(A) biosynthesis; lipid IV(A) from (3R)-3-hydroxytetradecanoyl-[acyl-carrier-protein] and UDP-N-acetyl-alpha-D-glucosamine: step 6/6. Functionally, transfers the gamma-phosphate of ATP to the 4'-position of a tetraacyldisaccharide 1-phosphate intermediate (termed DS-1-P) to form tetraacyldisaccharide 1,4'-bis-phosphate (lipid IVA). The sequence is that of Tetraacyldisaccharide 4'-kinase from Acidovorax sp. (strain JS42).